Here is a 572-residue protein sequence, read N- to C-terminus: Urease subunit alpha (572 aa).

The region spanning 134-572 (AGIDSHIHLI…ASMNQRYFFG (439 aa)) is the Urease domain. Ni(2+)-binding residues include histidine 139, histidine 141, and lysine 222. N6-carboxylysine is present on lysine 222. Histidine 224 provides a ligand contact to substrate. Ni(2+) is bound by residues histidine 251 and histidine 277. Histidine 325 functions as the Proton donor in the catalytic mechanism. Residue aspartate 365 participates in Ni(2+) binding.

This sequence belongs to the metallo-dependent hydrolases superfamily. Urease alpha subunit family. In terms of assembly, heterotrimer of UreA (gamma), UreB (beta) and UreC (alpha) subunits. Three heterotrimers associate to form the active enzyme. Ni cation serves as cofactor. Carboxylation allows a single lysine to coordinate two nickel ions.

Its subcellular location is the cytoplasm. It carries out the reaction urea + 2 H2O + H(+) = hydrogencarbonate + 2 NH4(+). It participates in nitrogen metabolism; urea degradation; CO(2) and NH(3) from urea (urease route): step 1/1. The sequence is that of Urease subunit alpha from Yersinia pseudotuberculosis serotype O:1b (strain IP 31758).